The chain runs to 258 residues: Ciliogenesis and planar polarity effector 2 (258 aa).

Residues 51-258 (IDTASYKIFV…LPSSPESAPG (208 aa)) form a small GTPase-like region. Ser-64, Gly-65, Gly-67, Lys-68, Thr-69, Ala-70, Ile-82, His-84, Thr-87, Lys-176, Asp-178, and Ser-206 together coordinate GTP.

This sequence belongs to the small GTPase superfamily. Rab family. As to quaternary structure, interacts with FUZ. Associates with the CPLANE (ciliogenesis and planar polarity effectors) complex via its interaction with FUZ.

The protein resides in the cytoplasm. It is found in the cytoskeleton. The protein localises to the cilium basal body. It localises to the microtubule organizing center. Its subcellular location is the centrosome. The protein resides in the centriole. In terms of biological role, required for efficient primary cilia initiation, regulating a late step in cilia initiation. Plays a role in the final maturation of the mother centriole and ciliary vesicle that allows extension of the ciliary axoneme. The sequence is that of Ciliogenesis and planar polarity effector 2 (Cplane2) from Mus musculus (Mouse).